Consider the following 117-residue polypeptide: Large ribosomal subunit protein bL20 (117 aa).

The protein belongs to the bacterial ribosomal protein bL20 family.

Binds directly to 23S ribosomal RNA and is necessary for the in vitro assembly process of the 50S ribosomal subunit. It is not involved in the protein synthesizing functions of that subunit. In Rickettsia rickettsii (strain Iowa), this protein is Large ribosomal subunit protein bL20.